The chain runs to 265 residues: Undecaprenyl-diphosphatase (265 aa).

Transmembrane regions (helical) follow at residues 38–58 (SDMF…IIYW), 80–100 (LIVA…LGFE), 107–127 (PIAW…WAAA), 135–155 (ITWL…VFPG), 178–198 (TEFA…YELL), 216–236 (IAFV…LAYI), and 244–264 (FAIY…TGLI).

Belongs to the UppP family.

The protein localises to the cell inner membrane. It carries out the reaction di-trans,octa-cis-undecaprenyl diphosphate + H2O = di-trans,octa-cis-undecaprenyl phosphate + phosphate + H(+). Functionally, catalyzes the dephosphorylation of undecaprenyl diphosphate (UPP). Confers resistance to bacitracin. The chain is Undecaprenyl-diphosphatase from Rhizobium johnstonii (strain DSM 114642 / LMG 32736 / 3841) (Rhizobium leguminosarum bv. viciae).